Consider the following 445-residue polypeptide: 23S rRNA (uracil(1939)-C(5))-methyltransferase RlmD (445 aa).

The region spanning S12–K70 is the TRAM domain. The [4Fe-4S] cluster site is built by C83, C89, C92, and C171. Positions 278, 307, 312, 328, 355, and 375 each coordinate S-adenosyl-L-methionine. The Nucleophile role is filled by C401.

Belongs to the class I-like SAM-binding methyltransferase superfamily. RNA M5U methyltransferase family. RlmD subfamily.

It catalyses the reaction uridine(1939) in 23S rRNA + S-adenosyl-L-methionine = 5-methyluridine(1939) in 23S rRNA + S-adenosyl-L-homocysteine + H(+). Catalyzes the formation of 5-methyl-uridine at position 1939 (m5U1939) in 23S rRNA. The sequence is that of 23S rRNA (uracil(1939)-C(5))-methyltransferase RlmD from Shewanella piezotolerans (strain WP3 / JCM 13877).